The primary structure comprises 83 residues: Small ribosomal subunit protein uS17 (83 aa).

This sequence belongs to the universal ribosomal protein uS17 family. In terms of assembly, part of the 30S ribosomal subunit.

In terms of biological role, one of the primary rRNA binding proteins, it binds specifically to the 5'-end of 16S ribosomal RNA. This is Small ribosomal subunit protein uS17 from Magnetococcus marinus (strain ATCC BAA-1437 / JCM 17883 / MC-1).